Reading from the N-terminus, the 142-residue chain is MSYSNILVAVAVTPESQQLLAKAVSIARPVKGHISLITLASDPEMYNQLAAPMLEDLRSVMHEETQSFLDKLIQDAGYPVDKTFIAYGELSEHILEVCHKHHFDLVICGNHNHSFFSRASCSAKRVIASSEVDVLLVPLTGD.

Belongs to the universal stress protein A family.

The protein localises to the cytoplasm. Its function is as follows. Required for resistance to DNA-damaging agents. The sequence is that of Universal stress protein C (uspC) from Escherichia coli (strain K12).